We begin with the raw amino-acid sequence, 454 residues long: Phosphoglucosamine mutase (454 aa).

Serine 101 acts as the Phosphoserine intermediate in catalysis. Mg(2+) contacts are provided by serine 101, aspartate 243, aspartate 245, and aspartate 247. Position 101 is a phosphoserine (serine 101).

Belongs to the phosphohexose mutase family. Requires Mg(2+) as cofactor. Activated by phosphorylation.

It carries out the reaction alpha-D-glucosamine 1-phosphate = D-glucosamine 6-phosphate. Catalyzes the conversion of glucosamine-6-phosphate to glucosamine-1-phosphate. The protein is Phosphoglucosamine mutase of Geotalea daltonii (strain DSM 22248 / JCM 15807 / FRC-32) (Geobacter daltonii).